The chain runs to 451 residues: Tubulin alpha-3 chain (451 aa).

Gln-11 contacts GTP. The residue at position 40 (Lys-40) is an N6-acetyllysine. GTP-binding residues include Glu-71, Ser-140, Gly-144, Thr-145, Thr-179, Asn-206, and Asn-228. Glu-71 contacts Mg(2+). The active site involves Glu-254.

Belongs to the tubulin family. In terms of assembly, dimer of alpha and beta chains. A typical microtubule is a hollow water-filled tube with an outer diameter of 25 nm and an inner diameter of 15 nM. Alpha-beta heterodimers associate head-to-tail to form protofilaments running lengthwise along the microtubule wall with the beta-tubulin subunit facing the microtubule plus end conferring a structural polarity. Microtubules usually have 13 protofilaments but different protofilament numbers can be found in some organisms and specialized cells. The cofactor is Mg(2+). Post-translationally, undergoes a tyrosination/detyrosination cycle, the cyclic removal and re-addition of a C-terminal tyrosine residue by the enzymes tubulin tyrosine carboxypeptidase (TTCP) and tubulin tyrosine ligase (TTL), respectively. In terms of processing, acetylation of alpha chains at Lys-40 stabilizes microtubules and affects affinity and processivity of microtubule motors. This modification has a role in multiple cellular functions, ranging from cell motility, cell cycle progression or cell differentiation to intracellular trafficking and signaling.

The protein localises to the cytoplasm. Its subcellular location is the cytoskeleton. The catalysed reaction is GTP + H2O = GDP + phosphate + H(+). Functionally, tubulin is the major constituent of microtubules, a cylinder consisting of laterally associated linear protofilaments composed of alpha- and beta-tubulin heterodimers. Microtubules grow by the addition of GTP-tubulin dimers to the microtubule end, where a stabilizing cap forms. Below the cap, tubulin dimers are in GDP-bound state, owing to GTPase activity of alpha-tubulin. The chain is Tubulin alpha-3 chain from Homarus americanus (American lobster).